The following is a 364-amino-acid chain: UDP-3-O-acylglucosamine N-acyltransferase (364 aa).

The active-site Proton acceptor is the His-257.

Belongs to the transferase hexapeptide repeat family. LpxD subfamily. Homotrimer.

The enzyme catalyses a UDP-3-O-[(3R)-3-hydroxyacyl]-alpha-D-glucosamine + a (3R)-hydroxyacyl-[ACP] = a UDP-2-N,3-O-bis[(3R)-3-hydroxyacyl]-alpha-D-glucosamine + holo-[ACP] + H(+). Its pathway is bacterial outer membrane biogenesis; LPS lipid A biosynthesis. Its function is as follows. Catalyzes the N-acylation of UDP-3-O-acylglucosamine using 3-hydroxyacyl-ACP as the acyl donor. Is involved in the biosynthesis of lipid A, a phosphorylated glycolipid that anchors the lipopolysaccharide to the outer membrane of the cell. The sequence is that of UDP-3-O-acylglucosamine N-acyltransferase from Paracoccus denitrificans (strain Pd 1222).